Reading from the N-terminus, the 347-residue chain is Endophilin-A3 (347 aa).

The interval 1-21 (MSVAGLKKQFHKASQLFSEKI) is membrane-binding amphipathic helix. The region spanning 18–249 (SEKISGAEGT…LQMRISAASS (232 aa)) is the BAR domain. Positions 60–87 (PNPAYRAKLGMLNTVSKIRGQVKTTGYP) are required for dimerization upon membrane association. Positions 181–201 (EEVRQAVEKFEESKELAERSM) form a coiled coil. The tract at residues 218–254 (FIEAALDYHRQSTEILQELQSKLQMRISAASSVPRRE) is interaction with ARC. The interval 248–271 (SSVPRREYKPRPVKRSSSELNGVS) is disordered. Residue serine 265 is modified to Phosphoserine. The region spanning 285–344 (MDQPCCRGLYDFEPENQGELGFKEGDIITLTNQIDENWYEGMIHGESGFFPINYVEVIVP) is the SH3 domain.

The protein belongs to the endophilin family. In terms of assembly, interacts with ARC. Interacts with DNM1, SGIP1 and SYNJ1. Interacts with the huntingtin exon 1 protein (HDEX1P) containing a glutamine repeat in the pathological range and promotes formation of insoluble polyglutamine-containing aggregates in vivo. Interacts with DYDC1. Interacts with FASLG. Interacts with ATXN2. Interacts with BIN2. As to expression, brain and testis.

It localises to the cytoplasm. Its subcellular location is the early endosome membrane. Implicated in endocytosis. May recruit other proteins to membranes with high curvature. The chain is Endophilin-A3 (SH3GL3) from Homo sapiens (Human).